A 342-amino-acid chain; its full sequence is NADH-quinone oxidoreductase subunit H (342 aa).

8 helical membrane-spanning segments follow: residues 15–35 (LLIITALQALAILVPLMLMVA), 86–106 (VLFILAPLLTFILAMIAWAVV), 119–139 (VGVLYLFAISSLGVYGVIIAG), 159–179 (VSYEVSIGFVMVAILLCVGSL), 190–210 (HVWFVLPMLPMAVIFFISGLA), 251–271 (FMICAMTTLLFLGGWLPPFDI), 277–297 (VPGPIWFVLKVCALMFVFFWV), and 316–336 (VFLPFSLVWLLLTACVLELAG).

This sequence belongs to the complex I subunit 1 family. In terms of assembly, NDH-1 is composed of 14 different subunits. Subunits NuoA, H, J, K, L, M, N constitute the membrane sector of the complex.

The protein resides in the cell inner membrane. It catalyses the reaction a quinone + NADH + 5 H(+)(in) = a quinol + NAD(+) + 4 H(+)(out). NDH-1 shuttles electrons from NADH, via FMN and iron-sulfur (Fe-S) centers, to quinones in the respiratory chain. The immediate electron acceptor for the enzyme in this species is believed to be ubiquinone. Couples the redox reaction to proton translocation (for every two electrons transferred, four hydrogen ions are translocated across the cytoplasmic membrane), and thus conserves the redox energy in a proton gradient. This subunit may bind ubiquinone. This chain is NADH-quinone oxidoreductase subunit H, found in Granulibacter bethesdensis (strain ATCC BAA-1260 / CGDNIH1).